The chain runs to 117 residues: Large ribosomal subunit protein bL20 (117 aa).

Belongs to the bacterial ribosomal protein bL20 family.

Binds directly to 23S ribosomal RNA and is necessary for the in vitro assembly process of the 50S ribosomal subunit. It is not involved in the protein synthesizing functions of that subunit. This is Large ribosomal subunit protein bL20 from Mesomycoplasma hyopneumoniae (strain J / ATCC 25934 / NCTC 10110) (Mycoplasma hyopneumoniae).